The following is a 189-amino-acid chain: Density-regulated protein homolog (189 aa).

One can recognise an SUI1 domain in the interval 105–172 (ICVSRAARGK…DLFDVIPEKW (68 aa)).

Belongs to the DENR family. As to quaternary structure, interacts with MCTS1.

Regulates translation as part of a complex with MCTS1. Specifically required for translational re-initiation in mRNAs containing upstream open reading frames (uORFs). Not required for standard translational initiation. Regulates expression of a subset of gene products including mbc, InR and EcR. This is Density-regulated protein homolog from Drosophila melanogaster (Fruit fly).